We begin with the raw amino-acid sequence, 333 residues long: MLGRPMKPSKCQECRDRAAWLDMFTALALAVFKTALGVLSGSMALQAHSLHSFGDFLTKGINLASVKLSSRPANSAFPYGYGKVQFLSANFIGISLMAGAAAMLWYNVTHLGSGHVQVPEVWAVFGALISAGTAELMHRYLRCVAEHTNSPAIMAAAADNRGDAYSSLAVLAGIVLSILGWVAADHLAAILVSLLVLRIGAVIAWDSIHGLMDGSVPSHRIDGIRQLLAAHHPGVSVVDLRGRRMGETWEVDLQLSISSQVTVEECHALTRELESRIAREEPHACHIRIRFIPQSGDATKTAVIETAAAVDEFAYLVEASAALRPLGHSRNGG.

A run of 5 helical transmembrane segments spans residues A19–L39, F86–Y106, L111–A131, V170–I190, and L191–L211.

It belongs to the cation diffusion facilitator (CDF) transporter (TC 2.A.4) family.

The protein localises to the cell inner membrane. Expression of just the minimal mamAB gene cluster (amb0961 to amb0978), including this gene, is sufficient to form a minimal magnetosome chain with small magnetite particles. This is Putative transporter MamV from Paramagnetospirillum magneticum (strain ATCC 700264 / AMB-1) (Magnetospirillum magneticum).